The chain runs to 453 residues: Growth/differentiation factor 9 (453 aa).

An N-terminal signal peptide occupies residues 1 to 27 (MALPNKFFLWFCCFAWLCFPISLDSLP). A propeptide spanning residues 28 to 318 (SRGEAQIVAR…EGVRSSRHRR (291 aa)) is cleaved from the precursor. N-linked (GlcNAc...) asparagine glycosylation is found at Asn-163, Asn-236, Asn-255, and Asn-269. Positions 304-328 (GEEAAEGVRSSRHRRDQESASSELK) are disordered. Basic and acidic residues predominate over residues 318-328 (RDQESASSELK). A glycan (N-linked (GlcNAc...) asparagine) is linked at Asn-337. 3 disulfides stabilise this stretch: Cys-352/Cys-418, Cys-381/Cys-450, and Cys-385/Cys-452.

It belongs to the TGF-beta family. In terms of assembly, homodimer or heterodimer (Potential). But, in contrast to other members of this family, cannot be disulfide-linked. Post-translationally, phosphorylated; phosphorylation is critical for GDF9 function.

It is found in the secreted. In terms of biological role, required for ovarian folliculogenesis. The sequence is that of Growth/differentiation factor 9 (GDF9) from Ovis aries (Sheep).